The sequence spans 177 residues: Large ribosomal subunit protein uL6 (177 aa).

Belongs to the universal ribosomal protein uL6 family. As to quaternary structure, part of the 50S ribosomal subunit.

In terms of biological role, this protein binds to the 23S rRNA, and is important in its secondary structure. It is located near the subunit interface in the base of the L7/L12 stalk, and near the tRNA binding site of the peptidyltransferase center. This Cupriavidus metallidurans (strain ATCC 43123 / DSM 2839 / NBRC 102507 / CH34) (Ralstonia metallidurans) protein is Large ribosomal subunit protein uL6.